The following is a 630-amino-acid chain: 1-deoxy-D-xylulose-5-phosphate synthase (630 aa).

Thiamine diphosphate is bound by residues His-72 and 113–115 (GHS). Asp-144 contacts Mg(2+). Residues 145 to 146 (GA), Asn-173, Tyr-284, and Glu-367 each bind thiamine diphosphate. Residue Asn-173 coordinates Mg(2+).

It belongs to the transketolase family. DXPS subfamily. As to quaternary structure, homodimer. It depends on Mg(2+) as a cofactor. Thiamine diphosphate is required as a cofactor.

It catalyses the reaction D-glyceraldehyde 3-phosphate + pyruvate + H(+) = 1-deoxy-D-xylulose 5-phosphate + CO2. It functions in the pathway metabolic intermediate biosynthesis; 1-deoxy-D-xylulose 5-phosphate biosynthesis; 1-deoxy-D-xylulose 5-phosphate from D-glyceraldehyde 3-phosphate and pyruvate: step 1/1. Its function is as follows. Catalyzes the acyloin condensation reaction between C atoms 2 and 3 of pyruvate and glyceraldehyde 3-phosphate to yield 1-deoxy-D-xylulose-5-phosphate (DXP). This is 1-deoxy-D-xylulose-5-phosphate synthase from Bacillus cereus (strain ATCC 10987 / NRS 248).